A 505-amino-acid polypeptide reads, in one-letter code: 2,3-bisphosphoglycerate-independent phosphoglycerate mutase (505 aa).

Mn(2+) is bound by residues D12 and S62. The active-site Phosphoserine intermediate is the S62. Substrate-binding positions include H123, 153–154, R185, R191, 257–260, and K330; these read RD and RPDR. Mn(2+) contacts are provided by D397, H401, D438, H439, and H456.

It belongs to the BPG-independent phosphoglycerate mutase family. In terms of assembly, monomer. Requires Mn(2+) as cofactor.

It catalyses the reaction (2R)-2-phosphoglycerate = (2R)-3-phosphoglycerate. Its pathway is carbohydrate degradation; glycolysis; pyruvate from D-glyceraldehyde 3-phosphate: step 3/5. In terms of biological role, catalyzes the interconversion of 2-phosphoglycerate and 3-phosphoglycerate. This chain is 2,3-bisphosphoglycerate-independent phosphoglycerate mutase, found in Staphylococcus saprophyticus subsp. saprophyticus (strain ATCC 15305 / DSM 20229 / NCIMB 8711 / NCTC 7292 / S-41).